The following is a 734-amino-acid chain: PI-PLC X-box domain-containing protein DDB_G0293730 (734 aa).

A coiled-coil region spans residues I8–K70. Residues K440–L604 enclose the PI-PLC X-box domain.

This Dictyostelium discoideum (Social amoeba) protein is PI-PLC X-box domain-containing protein DDB_G0293730.